A 353-amino-acid chain; its full sequence is Uroporphyrinogen decarboxylase (353 aa).

Residues 26 to 30, Asp-76, Tyr-153, Thr-208, and His-326 each bind substrate; that span reads RQAGR.

The protein belongs to the uroporphyrinogen decarboxylase family. As to quaternary structure, homodimer.

It is found in the cytoplasm. It catalyses the reaction uroporphyrinogen III + 4 H(+) = coproporphyrinogen III + 4 CO2. The protein operates within porphyrin-containing compound metabolism; protoporphyrin-IX biosynthesis; coproporphyrinogen-III from 5-aminolevulinate: step 4/4. In terms of biological role, catalyzes the decarboxylation of four acetate groups of uroporphyrinogen-III to yield coproporphyrinogen-III. This is Uroporphyrinogen decarboxylase from Chromohalobacter salexigens (strain ATCC BAA-138 / DSM 3043 / CIP 106854 / NCIMB 13768 / 1H11).